The primary structure comprises 431 residues: Divergent protein kinase domain 1B (431 aa).

The Cytoplasmic segment spans residues 1 to 30 (MRKLRRLVHMVLFCPISKGLQSRLPGIKVK). The May mediate ER retention motif lies at 5-6 (RR). The chain crosses the membrane as a helical span at residues 31 to 51 (YLFLAWLSVFVGSWVVYMHYS). At 52–431 (SYSELCRGHV…WKKISNTKYS (380 aa)) the chain is on the lumenal side. 2 disulfide bridges follow: C57–C94 and C62–C117.

The protein belongs to the DIPK family. Post-translationally, among the many cysteines in the lumenal domain, most are probably involved in disulfide bonds.

Its subcellular location is the endoplasmic reticulum membrane. The chain is Divergent protein kinase domain 1B (dipk1b) from Xenopus tropicalis (Western clawed frog).